The following is a 97-amino-acid chain: C-C motif chemokine 7 (97 aa).

The signal sequence occupies residues Met1–Ala23. Gln24 carries the pyrrolidone carboxylic acid modification. An N-linked (GlcNAc...) asparagine glycan is attached at Asn29. 2 disulfide bridges follow: Cys33–Cys57 and Cys34–Cys73.

The protein belongs to the intercrine beta (chemokine CC) family. As to quaternary structure, monomer. Interacts with TNFAIP6 (via Link domain).

Its subcellular location is the secreted. Chemotactic factor that attracts monocytes and eosinophils, but not neutrophils. Augments monocyte anti-tumor activity. The polypeptide is C-C motif chemokine 7 (Ccl7) (Rattus norvegicus (Rat)).